Reading from the N-terminus, the 366-residue chain is 3-isopropylmalate dehydrogenase (366 aa).

Residue 76–89 participates in NAD(+) binding; the sequence is GPKWDANPSHLRPE. Substrate is bound by residues Arg-96, Arg-106, Arg-134, and Asp-219. Residues Asp-219, Asp-243, and Asp-247 each coordinate Mg(2+). 277–289 contributes to the NAD(+) binding site; sequence GSAPDIAGKGIAN.

This sequence belongs to the isocitrate and isopropylmalate dehydrogenases family. LeuB type 1 subfamily. Homodimer. Requires Mg(2+) as cofactor. Mn(2+) is required as a cofactor.

The protein resides in the cytoplasm. The catalysed reaction is (2R,3S)-3-isopropylmalate + NAD(+) = 4-methyl-2-oxopentanoate + CO2 + NADH. It functions in the pathway amino-acid biosynthesis; L-leucine biosynthesis; L-leucine from 3-methyl-2-oxobutanoate: step 3/4. In terms of biological role, catalyzes the oxidation of 3-carboxy-2-hydroxy-4-methylpentanoate (3-isopropylmalate) to 3-carboxy-4-methyl-2-oxopentanoate. The product decarboxylates to 4-methyl-2 oxopentanoate. This is 3-isopropylmalate dehydrogenase from Oceanobacillus iheyensis (strain DSM 14371 / CIP 107618 / JCM 11309 / KCTC 3954 / HTE831).